A 182-amino-acid chain; its full sequence is Allergen Bla g 4 (182 aa).

Positions 1 to 12 (AVLALCATDTLA) are cleaved as a signal peptide. An N-linked (GlcNAc...) asparagine glycan is attached at Asn-72.

This sequence belongs to the calycin superfamily. Triabin family.

It is found in the secreted. In terms of biological role, probable ligand-binding protein. The polypeptide is Allergen Bla g 4 (Blattella germanica (German cockroach)).